The following is a 327-amino-acid chain: Tetraacyldisaccharide 4'-kinase (327 aa).

58-65 lines the ATP pocket; it reads TVGGTGKT.

Belongs to the LpxK family.

The enzyme catalyses a lipid A disaccharide + ATP = a lipid IVA + ADP + H(+). The protein operates within glycolipid biosynthesis; lipid IV(A) biosynthesis; lipid IV(A) from (3R)-3-hydroxytetradecanoyl-[acyl-carrier-protein] and UDP-N-acetyl-alpha-D-glucosamine: step 6/6. Functionally, transfers the gamma-phosphate of ATP to the 4'-position of a tetraacyldisaccharide 1-phosphate intermediate (termed DS-1-P) to form tetraacyldisaccharide 1,4'-bis-phosphate (lipid IVA). The chain is Tetraacyldisaccharide 4'-kinase from Alcanivorax borkumensis (strain ATCC 700651 / DSM 11573 / NCIMB 13689 / SK2).